We begin with the raw amino-acid sequence, 208 residues long: Probable GTP-binding protein EngB (208 aa).

The region spanning 22 to 195 (GLPEIALAGR…WGALEDIFVE (174 aa)) is the EngB-type G domain. Residues 30-37 (GRSNVGKS), 57-61 (GKTRT), 75-78 (DLPG), 142-145 (TKSD), and 174-176 (ISS) each bind GTP. Positions 37 and 59 each coordinate Mg(2+).

The protein belongs to the TRAFAC class TrmE-Era-EngA-EngB-Septin-like GTPase superfamily. EngB GTPase family. Requires Mg(2+) as cofactor.

Functionally, necessary for normal cell division and for the maintenance of normal septation. In Alkaliphilus metalliredigens (strain QYMF), this protein is Probable GTP-binding protein EngB.